Here is a 123-residue protein sequence, read N- to C-terminus: uncharacterized protein (123 aa).

Positions 1-19 (MKIKYFFIPLFSSAILFSA) are cleaved as a signal peptide. A lipid anchor (N-palmitoyl cysteine) is attached at cysteine 20. Cysteine 20 carries S-diacylglycerol cysteine lipidation.

It belongs to the MG439/MG440 family.

The protein resides in the cell membrane. This is an uncharacterized protein from Mycoplasma pneumoniae (strain ATCC 29342 / M129 / Subtype 1) (Mycoplasmoides pneumoniae).